Consider the following 165-residue polypeptide: Pro-MCH (165 aa).

The N-terminal stretch at 1–21 (MAKMSLSSYMLMLAFSLFSHG) is a signal peptide. Residues 69 to 82 (DESGFMKDDDDKTT) are compositionally biased toward basic and acidic residues. Positions 69-89 (DESGFMKDDDDKTTKNTGSKQ) are disordered. I143 is subject to Isoleucine amide. Cysteines 153 and 162 form a disulfide.

It belongs to the melanin-concentrating hormone family. Pro-MCH is processed differentially in the brain and in peripheral organs producing two neuropeptides; NEI and MCH. A third peptide, NGE, may also be produced. Preferential processing in neurons by prohormone convertase 2 (PC2) generates NEI. MCH is generated in neurons of the lateral hypothalmic area by several prohormone convertases including PC1/3, PC2 and PC5/6. In terms of tissue distribution, MCH is present in all regions of the brain and in neurointermediate lobe of the pituarity gland, with highest concentrations in the hypothalamus. Also expressed to a much lesser extent in stomach, lamina propria of both duodenum and colon, ovary, thymus, pancreas, adrenal gland and testis (spermatogonia, early spermatocytes and Sertoli cells). Weak expression in heart and lung. The other peptides are expressed at least in Sertoli cells, nei being also expressed in brain, stomach and proximal duodenum. In brain exclusively mature mch and nei peptides are present. In peripheral tissues a large product, encompassing the NEI and MCH domains of the precursor, is found predominantly. At low levels fully processed MCH and NEI peptides are present in gut. No expression in peripheral blood.

The protein resides in the secreted. Functionally, MCH inhibits ACTH secretion at the end of the light on period which corresponds to the peak of the circadian rhythm in ACTH. Inhibits also stress induced ACTH release during the light off period of the cycle. Involved as a neurotransmitter or neuromodulator in a broad array of neuronal functions. Stimulates sexual behavior when injected into the ventromedial nucleus, this effect is antagonized by NEI. In the medial preoptic area, stimulates anxiety and sexual behavior. Antagonizes inhibitory effect of melanotropin alpha on exploration behavior. Its function is as follows. NEI can influence differentiation of neuronal processes in brain neurons. Affects the content of neurofilament protein in neuritogenesis (in vitro). May also be a neuromodulatory factor. In behavioral tests, it stimulates exploration and anxiety when injected into the ventromedial nucleus. Also stimulates grooming, locomotion and rearing. May antagonize the inhibitory effect of mch on ACTH release. Reduces dopamine and dopac release in the ventromedial nucleus. The protein is Pro-MCH (Pmch) of Rattus norvegicus (Rat).